Here is a 339-residue protein sequence, read N- to C-terminus: MGYIKFQKDRKFEIVPIGRVAIDFNPTDINRPLSKSMTFKKYLGGSPANIAVGLSRLGKKVGFIGKVSKDQFGKFVVDYFNNEGIDTSQIKYAENGESLGLTFTEIASPTESSILMYRNGIADLELDVNEIDEEYIKNTKAIVISGTALAKSPSREAALKALELAKKNDTVVIFDVDYREYNWKNKDEIAIYYSIVGKQSDIVMGSREEFDLMESLIVKEKSTDEESAKRWLGFGNKIVVIKHGKEGSTAYTNDGKSYKIKPFPVKLLKSFGGGDAYASAFIYGILEEWDIMDALEFGSASAAMLVASHSCSEDMPTVKEINEFIKEKKEQYGEMIARG.

The protein belongs to the carbohydrate kinase PfkB family.

The enzyme catalyses 5-dehydro-2-deoxy-D-gluconate + ATP = 6-phospho-5-dehydro-2-deoxy-D-gluconate + ADP + H(+). The protein operates within polyol metabolism; myo-inositol degradation into acetyl-CoA; acetyl-CoA from myo-inositol: step 5/7. Functionally, catalyzes the phosphorylation of 5-dehydro-2-deoxy-D-gluconate (2-deoxy-5-keto-D-gluconate or DKG) to 6-phospho-5-dehydro-2-deoxy-D-gluconate (DKGP). In Clostridium botulinum (strain Alaska E43 / Type E3), this protein is 5-dehydro-2-deoxygluconokinase.